A 461-amino-acid polypeptide reads, in one-letter code: MRNVKNYTPKEIVAELDKYIVGQKEAKKSVAVALRNRYRRSLLPEDFKEEVTPKNILMVGPTGVGKTEIARRIAKLVEAPFVKVEATKFTEVGYVGRDVDSMVRDLVEAAVRMVKEEKLKAVTEKAKKLAEERLIDYLLGKKKKQPKNPFEMIFNYPSSERTEEPDNVDSYKREEIRQRLRSGELDNHMVEIEVTDTTPPMLEMYTNLGAEELNITLQDMFSDLLPKKKKLRKVTVAEAKKILEAEEAQNLIDMDEVIEEAVKRAENDGIIFIDEIDKIASTGYSAGPDVSREGVQRDLLPIIEGCTVMTKYGPVKTDYILFIAAGAFNVAKVSDLIPELQGRFPIRVNLKPLTKEDFVRILKEPKNALTKQYQELLRTEGVEIKYTEEAIETIAEVAYLINQQSEDIGARRLHTVMEKLFEDLSFHAPELSGQEIVITADYVKEQLKDSLNKYEVNKYIL.

ATP contacts are provided by residues valine 21, 63–68 (GVGKTE), aspartate 274, glutamate 339, and arginine 411.

The protein belongs to the ClpX chaperone family. HslU subfamily. In terms of assembly, a double ring-shaped homohexamer of HslV is capped on each side by a ring-shaped HslU homohexamer. The assembly of the HslU/HslV complex is dependent on binding of ATP.

It localises to the cytoplasm. Functionally, ATPase subunit of a proteasome-like degradation complex; this subunit has chaperone activity. The binding of ATP and its subsequent hydrolysis by HslU are essential for unfolding of protein substrates subsequently hydrolyzed by HslV. HslU recognizes the N-terminal part of its protein substrates and unfolds these before they are guided to HslV for hydrolysis. The protein is ATP-dependent protease ATPase subunit HslU of Caldanaerobacter subterraneus subsp. tengcongensis (strain DSM 15242 / JCM 11007 / NBRC 100824 / MB4) (Thermoanaerobacter tengcongensis).